The sequence spans 542 residues: Chaperonin GroEL (542 aa).

ATP is bound by residues 29–32 (TLGP), 86–90 (DGTTT), Gly413, 477–479 (NAA), and Asp493.

This sequence belongs to the chaperonin (HSP60) family. As to quaternary structure, forms a cylinder of 14 subunits composed of two heptameric rings stacked back-to-back. Interacts with the co-chaperonin GroES.

It localises to the cytoplasm. The catalysed reaction is ATP + H2O + a folded polypeptide = ADP + phosphate + an unfolded polypeptide.. In terms of biological role, together with its co-chaperonin GroES, plays an essential role in assisting protein folding. The GroEL-GroES system forms a nano-cage that allows encapsulation of the non-native substrate proteins and provides a physical environment optimized to promote and accelerate protein folding. The chain is Chaperonin GroEL from Beutenbergia cavernae (strain ATCC BAA-8 / DSM 12333 / CCUG 43141 / JCM 11478 / NBRC 16432 / NCIMB 13614 / HKI 0122).